An 859-amino-acid polypeptide reads, in one-letter code: Probable helicase A859L (859 aa).

One can recognise a Helicase ATP-binding domain in the interval Tyr-178–Ala-349. Residue Met-191–Thr-198 coordinates ATP. The DEAH box motif lies at Asp-298–His-301. Residues Gln-394 to Ser-553 enclose the Helicase C-terminal domain.

This sequence belongs to the asfivirus helicase A859L family.

This chain is Probable helicase A859L, found in Ornithodoros (relapsing fever ticks).